The following is a 195-amino-acid chain: NADH dehydrogenase [ubiquinone] iron-sulfur protein 3 (195 aa).

It belongs to the complex I 30 kDa subunit family. In terms of assembly, complex I is composed of about 45 different subunits. This is a component of the iron-sulfur (IP) fragment of the enzyme.

The protein localises to the mitochondrion inner membrane. The enzyme catalyses a ubiquinone + NADH + 5 H(+)(in) = a ubiquinol + NAD(+) + 4 H(+)(out). Functionally, core subunit of the mitochondrial membrane respiratory chain NADH dehydrogenase (Complex I) that is believed to belong to the minimal assembly required for catalysis. Complex I functions in the transfer of electrons from NADH to the respiratory chain. The immediate electron acceptor for the enzyme is believed to be ubiquinone. In Marchantia polymorpha (Common liverwort), this protein is NADH dehydrogenase [ubiquinone] iron-sulfur protein 3 (NAD9).